Reading from the N-terminus, the 295-residue chain is MATLKDIRTRIQSIASTQQVTKAMKMVSAAKLRRAQDSAIQARPYAAKLKEMLGSLSTRVDTTLNPLLSDRDEVKNVLVVVITSDRGLCGAFNANIIKIAQKVVTEEHGDLYRDGKVEMLCAGSKGNDYFRKRGFSISKAYPGLFQNLHFSVAREIAEYASERYLKGEVDKVVVVYNEFKSVLAPVLKSEVLLPITPEKVEGEKTGSSIDYIYEPSPSAIIDVLVPKHLNTQIWRMMLESNAAEHASRMTAMDSATENAKELMRVLKISYNRARQAAITTELSEIVAGAEALQGE.

Belongs to the ATPase gamma chain family. In terms of assembly, F-type ATPases have 2 components, CF(1) - the catalytic core - and CF(0) - the membrane proton channel. CF(1) has five subunits: alpha(3), beta(3), gamma(1), delta(1), epsilon(1). CF(0) has three main subunits: a, b and c.

Its subcellular location is the cell inner membrane. Its function is as follows. Produces ATP from ADP in the presence of a proton gradient across the membrane. The gamma chain is believed to be important in regulating ATPase activity and the flow of protons through the CF(0) complex. The polypeptide is ATP synthase gamma chain (Chlorobium phaeobacteroides (strain BS1)).